A 433-amino-acid polypeptide reads, in one-letter code: MSLPKELEKVLEITKAQNVWRRTQTLNLIASENVMSPLAESVYMSDFMSRYAEGKPYKRYYQGTKYTDEIETLTMELMNEITNSKDCDLRPTSGTIANAAVFRVLAEPGDKALIAPVQAGAHVSHTKFGTLGALGIQHIEMPFDEENINVDVDKAIKMIEEVKPKFVVLGGSLYLFPHPTKELAQHVHAVGAKLVYDAAHVYGLIEGKVWSNPLKDGADIMTVSTHKTFPGPQGGAIFSDGSEVFKQVSKTIFPWFVSNHHLHRLPATAVTAIEMKYFGESYANQILRNSKALAEALAERGFKVIGENLGYTKSHQVAVDVRQFGGGNKIAKLLEDANIIVNKNLLPYDKPEDVSDPSGLRIGVQEMTRYGMKEGEMEEIAELFKKVIIDKKDVNEVKKEVIEMRRNFLEVKYTFDDMKDLEKYSSKSLKLII.

121–123 (AHV) lines the (6S)-5,6,7,8-tetrahydrofolate pocket. Lys-227 carries the post-translational modification N6-(pyridoxal phosphate)lysine. Glu-243 serves as a coordination point for (6S)-5,6,7,8-tetrahydrofolate.

Belongs to the SHMT family. As to quaternary structure, homodimer. The cofactor is pyridoxal 5'-phosphate.

The protein resides in the cytoplasm. The enzyme catalyses 5,10-methylenetetrahydrosulfopterin + glycine + H2O = tetrahydrosulfopterin + L-serine. Its pathway is amino-acid biosynthesis; glycine biosynthesis; glycine from L-serine: step 1/1. Is completely inhibited by addition of NaCNBH(3) in vitro; this reagent is a known inhibitor of PLP enzymes, that reduces the internal aldimine of PLP to the catalytically inactive and stable secondary amine. Is also inhibited by L-cysteine, which forms a thiazolidine complex with the active site PLP. Its function is as follows. Catalyzes the reversible interconversion of serine and glycine with the modified folate sulfopterin serving as the one-carbon carrier. Cannot use tetrahydrofolate (THF or H4PteGlu) as the pteridine substrate. Also exhibits a pteridine-independent aldolase activity toward beta-hydroxyamino acids, producing glycine and aldehydes, via a retro-aldol mechanism. Thus, is able to catalyze the cleavage of both allo-threonine and beta-phenylserine. In Saccharolobus solfataricus (strain ATCC 35092 / DSM 1617 / JCM 11322 / P2) (Sulfolobus solfataricus), this protein is Serine hydroxymethyltransferase.